A 185-amino-acid polypeptide reads, in one-letter code: Calcium-binding protein K-like (185 aa).

2 EF-hand domains span residues 60–95 (WDEA…MTRA) and 96–131 (PTTD…VVVC). 9 residues coordinate Ca(2+): Asp73, Asp75, Asn77, Glu84, Asp109, Asp111, Ser113, Tyr115, and Glu120.

The protein belongs to the recoverin family.

This is Calcium-binding protein K-like from Dictyostelium discoideum (Social amoeba).